The following is a 579-amino-acid chain: Ribonucleoside-diphosphate reductase small chain (579 aa).

Fe cation-binding residues include Asp130, Glu160, and His163. Residue Tyr167 is part of the active site. Fe cation contacts are provided by Glu225, Glu258, and His261. In terms of domain architecture, Fido spans 435 to 579 (DMTWTLKDVH…VSVFVDQFYR (145 aa)).

It belongs to the ribonucleoside diphosphate reductase small chain family. Heterotetramer composed of a homodimer of the large subunit (R1) and a homodimer of the small subunit (R2). Larger multisubunit protein complex are also active, composed of (R1)n(R2)n. Requires Fe cation as cofactor.

It catalyses the reaction a 2'-deoxyribonucleoside 5'-diphosphate + [thioredoxin]-disulfide + H2O = a ribonucleoside 5'-diphosphate + [thioredoxin]-dithiol. Ribonucleoside-diphosphate reductase holoenzyme provides the precursors necessary for viral DNA synthesis. Allows virus growth in non-dividing cells. Catalyzes the biosynthesis of deoxyribonucleotides from the corresponding ribonucleotides. The protein is Ribonucleoside-diphosphate reductase small chain of Magallana gigas (Pacific oyster).